Consider the following 969-residue polypeptide: Leucine--tRNA ligase (969 aa).

The segment at 1 to 23 is disordered; the sequence is MTESPTTSPATGSGAAAPDSDAP. The 'HIGH' region motif lies at 78 to 89; the sequence is PYPSGEGLHVGH. A 'KMSKS' region motif is present at residues 737-741; that stretch reads KIGKS. K740 serves as a coordination point for ATP.

It belongs to the class-I aminoacyl-tRNA synthetase family.

It is found in the cytoplasm. The enzyme catalyses tRNA(Leu) + L-leucine + ATP = L-leucyl-tRNA(Leu) + AMP + diphosphate. This Mycobacterium avium (strain 104) protein is Leucine--tRNA ligase.